The chain runs to 427 residues: MSAIVDIIGREILDSRGNPTVECDVLLESGTMGRAAVPSGASTGSREAIELRDGEAGRYNGKGVLKAVEHINTEISEAIMGLDASEQAFLDKTLLELDGTDNKSRLGANAMLAVSMAVAKAAAEEAGLPLYRYFGGSGAMQLPVPMMNIVNGGAHANNSLDIQEFMIVPVSQPTFREALRCGAEVFHALKKILSDRGMSTAVGDEGGFAPNFGSNDECLSTILQAIEKAGYRAGEDVLLALDCAASEFYHDGKYQLAGEGLQLSSAEFTDYLATLADKFPIVSIEDGMHESDWEGWKLLTDRLGKKVQLVGDDLFVTNTRILKEGIEKGIANSILIKINQIGTLTETFAAIEMAKRAGYTAVISHRSGETEDSTIADIAVGLNAGQIKTGSLSRSDRISKYNQLLRIEEDLGDIASYPGKSAFYNLR.

Residue Q163 participates in (2R)-2-phosphoglycerate binding. The Proton donor role is filled by E205. Mg(2+) contacts are provided by D242, E285, and D312. K337, R366, S367, and K388 together coordinate (2R)-2-phosphoglycerate. K337 (proton acceptor) is an active-site residue.

Belongs to the enolase family. Requires Mg(2+) as cofactor.

The protein localises to the cytoplasm. It is found in the secreted. It localises to the cell surface. The catalysed reaction is (2R)-2-phosphoglycerate = phosphoenolpyruvate + H2O. The protein operates within carbohydrate degradation; glycolysis; pyruvate from D-glyceraldehyde 3-phosphate: step 4/5. Its function is as follows. Catalyzes the reversible conversion of 2-phosphoglycerate (2-PG) into phosphoenolpyruvate (PEP). It is essential for the degradation of carbohydrates via glycolysis. This is Enolase from Burkholderia lata (strain ATCC 17760 / DSM 23089 / LMG 22485 / NCIMB 9086 / R18194 / 383).